A 119-amino-acid polypeptide reads, in one-letter code: Beta-2-microglobulin (119 aa).

An N-terminal signal peptide occupies residues 1-20 (MARSVVVALLVLLSLSGLEA). Residues 25–114 (PKIQVYSRHP…VTFSTPKTVK (90 aa)) form the Ig-like C1-type domain. C45 and C100 are disulfide-bonded.

It belongs to the beta-2-microglobulin family. As to quaternary structure, heterodimer of an alpha chain and a beta chain. Beta-2-microglobulin is the beta-chain of major histocompatibility complex class I molecules.

Its subcellular location is the secreted. Component of the class I major histocompatibility complex (MHC). Involved in the presentation of peptide antigens to the immune system. This chain is Beta-2-microglobulin (B2M), found in Ateles paniscus (Black spider monkey).